A 316-amino-acid chain; its full sequence is MAFLNIFKQKRGDEASQLSAKGREEISQSIKICKSDDAANEHSCSGDCKTEIEEGEQAFAKLKIEHETPLLNSSKTPKIHFVVPTSQIDWQHDACLEDPKSVQYKISQWCDKNSAKFSNVGTGKTLNCAVSSLPKDIMDIDVMRGTKNNVLILPYFIWLNDLRSDDVEATLDGLVPDLLDENISREKLLETRPNVAVARERAFVFICSHTTRDKRCGITAPYLKKVFDSKLQEHGLYRDNSDYRAEGVKIAFVNHVGGHKFAANVQIYLRNPNTLIWLGRVTPTIVPSIVEHLIVPEEPTLPFPEKVRCIKKYQSW.

Belongs to the APD1 family.

Its subcellular location is the cytoplasm. It localises to the nucleus. Functionally, required for normal localization of actin patches. Involved in tolerance to sodium ions and hydrogen peroxide. This is Actin patches distal protein 1 (APD1) from Saccharomyces cerevisiae (strain ATCC 204508 / S288c) (Baker's yeast).